Reading from the N-terminus, the 266-residue chain is Aquaporin TIP3-2 (266 aa).

2 consecutive transmembrane segments (helical) span residues 29 to 49 (AAIS…GSVL) and 66 to 86 (GLVA…AVAV). An NPA 1 motif is present at residues 94 to 96 (NPA). 3 helical membrane passes run 109-129 (LVRA…ATLL), 153-173 (AVLL…ATVV), and 180-200 (LGTI…LAGG). An NPA 2 motif is present at residues 208–210 (NPA). The chain crosses the membrane as a helical span at residues 228-248 (YWLGPFLGAGLAGLVYEYLLI).

This sequence belongs to the MIP/aquaporin (TC 1.A.8) family. TIP (TC 1.A.8.10) subfamily.

The protein resides in the vacuole membrane. In terms of biological role, aquaporins facilitate the transport of water and small neutral solutes across cell membranes. The chain is Aquaporin TIP3-2 (TIP3-2) from Zea mays (Maize).